Consider the following 910-residue polypeptide: MMPSYTPMIQQYLHIKAQYPDAFLFFRLGDFYEMFFDDAIKAAQELEITLTSRDGGGDERVPMCGVPYHSAQGYIEQLVEKGYKVAICEQVEDPKTAKGVVRREVVQLVTPGTLMEGKGLTEKENHYLATLTPFADSTYGLAYADLSTGEVRLTLLSSWEETGNELHAIGAREIVISSDSAEEWVRELKERYGAAISYEDETWLRDEWSSVAGHVTQEKLRVTVARLLHYLVRTQKRQLDHLQPAELYQVDQYMKMDRHSKLHLELVETVRSKGRKGSLLWLLDETVTAMGGRLLKQWLDRPLIDQRAIERRLDFVETLKTSYFERHELRDRLRDVYDIERLVGRIAYGNANARDLVQLKKSLSQVPSLRQTVSGLPLAEVDELVGRLDPCEELVDLLERAIQEQPPLSIKEGNIIKDGYDERLDRYRDASRNGKAWIAELEAKEREVTGIKSLKVGYNRVFGYYIEVTKPNLPLIPEGRYERKQTLANAERFITAELKEKEALILEAEEKSVELEYELFVAIREQVKEYIPRLQTLAKAIAELDVLQALATVSDERRYVRPQFSTERVLAIEGGRHPVVEKVLGAQTYVPNDCYMNREREMLLITGPNMAGKSTYMRQVALTAIMAQIGCFVPAERAVLPIFDQVFTRIGAADDLSAGQSTFMVEMLEARRAITHATQNSLILFDEIGRGTSTYDGMALAQAMIEYIHDHIGAKTLFSTHYHELTALESSLERLCNVHARAVEENGKVVFLHQIADGPADRSYGIHVAELAGLPISLIERARDILAKLEQSSGNGSLEQGIGEEAGRENGSLMEAASQQQSELELTVGSAADRVVEQSVERQAEHRASAGNEASFEQLSMFPDLAPAPVEPHLSSKEKKALAALKEVNLLEMTPLEALNKLYELQKLLK.

ATP is bound at residue G607 to S614.

This sequence belongs to the DNA mismatch repair MutS family.

Its function is as follows. This protein is involved in the repair of mismatches in DNA. It is possible that it carries out the mismatch recognition step. This protein has a weak ATPase activity. The sequence is that of DNA mismatch repair protein MutS from Geobacillus thermodenitrificans (strain NG80-2).